The sequence spans 212 residues: Pyridoxine/pyridoxamine 5'-phosphate oxidase (212 aa).

Substrate contacts are provided by residues 8–11 (RRSY) and Lys-66. FMN-binding positions include 61–66 (RIVLLK), 76–77 (FT), Arg-82, Lys-83, and Gln-105. Substrate-binding residues include Tyr-123, Arg-127, and Ser-131. Residues 140-141 (QS) and Trp-184 each bind FMN. 190 to 192 (RLH) serves as a coordination point for substrate. Residue Arg-194 participates in FMN binding.

The protein belongs to the pyridoxamine 5'-phosphate oxidase family. Homodimer. Requires FMN as cofactor.

It catalyses the reaction pyridoxamine 5'-phosphate + O2 + H2O = pyridoxal 5'-phosphate + H2O2 + NH4(+). It carries out the reaction pyridoxine 5'-phosphate + O2 = pyridoxal 5'-phosphate + H2O2. It participates in cofactor metabolism; pyridoxal 5'-phosphate salvage; pyridoxal 5'-phosphate from pyridoxamine 5'-phosphate: step 1/1. Its pathway is cofactor metabolism; pyridoxal 5'-phosphate salvage; pyridoxal 5'-phosphate from pyridoxine 5'-phosphate: step 1/1. In terms of biological role, catalyzes the oxidation of either pyridoxine 5'-phosphate (PNP) or pyridoxamine 5'-phosphate (PMP) into pyridoxal 5'-phosphate (PLP). This Cupriavidus necator (strain ATCC 17699 / DSM 428 / KCTC 22496 / NCIMB 10442 / H16 / Stanier 337) (Ralstonia eutropha) protein is Pyridoxine/pyridoxamine 5'-phosphate oxidase.